The sequence spans 259 residues: 3-methyl-2-oxobutanoate hydroxymethyltransferase (259 aa).

Mg(2+)-binding residues include aspartate 44 and aspartate 83. 3-methyl-2-oxobutanoate-binding positions include 44 to 45 (DS), aspartate 83, and lysine 112. Glutamate 114 serves as a coordination point for Mg(2+). Glutamate 177 acts as the Proton acceptor in catalysis.

Belongs to the PanB family. Homodecamer; pentamer of dimers. Mg(2+) serves as cofactor.

It is found in the cytoplasm. The catalysed reaction is 3-methyl-2-oxobutanoate + (6R)-5,10-methylene-5,6,7,8-tetrahydrofolate + H2O = 2-dehydropantoate + (6S)-5,6,7,8-tetrahydrofolate. The protein operates within cofactor biosynthesis; (R)-pantothenate biosynthesis; (R)-pantoate from 3-methyl-2-oxobutanoate: step 1/2. Catalyzes the reversible reaction in which hydroxymethyl group from 5,10-methylenetetrahydrofolate is transferred onto alpha-ketoisovalerate to form ketopantoate. This chain is 3-methyl-2-oxobutanoate hydroxymethyltransferase, found in Nitratiruptor sp. (strain SB155-2).